Reading from the N-terminus, the 300-residue chain is Serine/arginine-rich splicing factor SR34A (300 aa).

The region spanning 7–82 (RSIYVGNLPG…CRLRVELAHG (76 aa)) is the RRM 1 domain. 2 disordered regions span residues 81–110 (HGGRGQSSSDRRGGYGGGGSGYGGGGGGGG) and 198–300 (YESS…EGSV). Positions 94 to 110 (GYGGGGSGYGGGGGGGG) are enriched in gly residues. In terms of domain architecture, RRM 2 spans 122–200 (FRVIVRGLPS…GFIRVKKYES (79 aa)). The segment covering 203 to 239 (SRSRSPSRSRSRSRSRSRSRGRGRSHSRSRSLSRSKS) has biased composition (basic residues). Phosphoserine is present on residues S207, S209, S231, S233, S239, S259, S275, and S285. The segment covering 253–262 (SRSISKSRSP) has biased composition (low complexity). The segment covering 275–287 (SRSKSRSRSRSRS) has biased composition (basic residues).

The protein belongs to the splicing factor SR family. SR subfamily. As to quaternary structure, component of the spliceosome.

The protein localises to the nucleus speckle. Its subcellular location is the nucleus. It is found in the nucleoplasm. In terms of biological role, probably involved in intron recognition and spliceosome assembly. This Arabidopsis thaliana (Mouse-ear cress) protein is Serine/arginine-rich splicing factor SR34A (SR34A).